The primary structure comprises 2183 residues: Genome polyprotein (2183 aa).

The N-myristoyl glycine; by host moiety is linked to residue glycine 2. Over 2–1493 the chain is Cytoplasmic; that stretch reads GAQVSTQKTG…HVSRAFICLQ (1492 aa). Residues 566–582 form an amphipathic alpha-helix region; the sequence is FYQGPTEESVERAMGRV. Catalysis depends on for protease 2A activity residues histidine 870 and aspartate 888. Zn(2+)-binding residues include cysteine 905 and cysteine 907. The active-site For protease 2A activity is the cysteine 959. Residues cysteine 965 and histidine 967 each coordinate Zn(2+). The membrane-binding stretch occupies residues 1099–1171; that stretch reads NNGWLKKFTE…EQSAPSQSDQ (73 aa). The oligomerization stretch occupies residues 1099–1237; sequence NNGWLKKFTE…SPGAGKSVAT (139 aa). The segment at 1120 to 1124 is RNA-binding; it reads AVKIQ. Residues 1203–1359 enclose the SF3 helicase domain; it reads EKKMSNYIQF…SMYSQNGKIN (157 aa). Residues cysteine 1367, cysteine 1379, and cysteine 1384 each contribute to the Zn(2+) site. The C4-type; degenerate zinc finger occupies 1367-1384; sequence CDEECCPVNFKRCCPLVC. The segment at 1411–1418 is RNA-binding; that stretch reads EYNHRHSV. Residues 1422–1427 are oligomerization; the sequence is LEALFQ. Residues 1494–1509 lie within the membrane without spanning it; sequence ALTTFVSVAGIIYIIY. Residues 1510-2183 lie on the Cytoplasmic side of the membrane; the sequence is KLFAGFQGAY…TLRRKWLDSF (674 aa). Tyrosine 1519 carries the O-(5'-phospho-RNA)-tyrosine modification. Positions 1539-1717 constitute a Peptidase C3 domain; it reads GPAFEFAVAM…FSAGLLKHYF (179 aa). Catalysis depends on for protease 3C activity residues histidine 1578, glutamate 1609, and cysteine 1685. Residues 1948–2064 enclose the RdRp catalytic domain; the sequence is GHLIAFDYSG…SYPWPIDASL (117 aa). Residues aspartate 1954 and aspartate 2050 each coordinate Mg(2+).

The protein belongs to the picornaviruses polyprotein family. In terms of assembly, interacts with capsid protein VP1 and capsid protein VP3 to form heterotrimeric protomers. Interacts with capsid protein VP0, and capsid protein VP3 to form heterotrimeric protomers. Five protomers subsequently associate to form pentamers which serve as building blocks for the capsid. Interacts with capsid protein VP2, capsid protein VP3 and capsid protein VP4 following cleavage of capsid protein VP0. Interacts with host CXADR. As to quaternary structure, interacts with capsid protein VP1 and capsid protein VP3 in the mature capsid. In terms of assembly, interacts with capsid protein VP0 and capsid protein VP1 to form heterotrimeric protomers. Five protomers subsequently associate to form pentamers which serve as building blocks for the capsid. Interacts with capsid protein VP4 in the mature capsid. Interacts with protein 2C; this interaction may be important for virion morphogenesis. Interacts with capsid protein VP1 and capsid protein VP3. As to quaternary structure, homodimer. In terms of assembly, homohexamer; forms a hexameric ring structure with 6-fold symmetry characteristic of AAA+ ATPases. Interacts (via N-terminus) with host RTN3 (via reticulon domain); this interaction is important for viral replication. Interacts with capsid protein VP3; this interaction may be important for virion morphogenesis. Interacts with protein 3CD. As to quaternary structure, homodimer. Interacts with host GBF1. Interacts (via GOLD domain) with host ACBD3 (via GOLD domain); this interaction allows the formation of a viral protein 3A/ACBD3 heterotetramer with a 2:2 stoichiometry, which will stimulate the recruitment of host PI4KB in order to synthesize PI4P at the viral RNA replication sites. In terms of assembly, interacts with RNA-directed RNA polymerase. Interacts with protein 3AB and with RNA-directed RNA polymerase. As to quaternary structure, interacts with Viral protein genome-linked and with protein 3CD. It depends on Mg(2+) as a cofactor. Post-translationally, specific enzymatic cleavages in vivo by the viral proteases yield processing intermediates and the mature proteins. In terms of processing, myristoylation is required for the formation of pentamers during virus assembly. Further assembly of 12 pentamers and a molecule of genomic RNA generates the provirion. During virion maturation, immature virions are rendered infectious following cleavage of VP0 into VP4 and VP2. This maturation seems to be an autocatalytic event triggered by the presence of RNA in the capsid and it is followed by a conformational change infectious virion. Post-translationally, myristoylation is required during RNA encapsidation and formation of the mature virus particle. In terms of processing, VPg is uridylylated by the polymerase into VPg-pUpU. This acts as a nucleotide-peptide primer for the genomic RNA replication.

The protein resides in the virion. Its subcellular location is the host cytoplasm. The protein localises to the host cytoplasmic vesicle membrane. It localises to the host nucleus. It catalyses the reaction a ribonucleoside 5'-triphosphate + H2O = a ribonucleoside 5'-diphosphate + phosphate + H(+). The enzyme catalyses Selective cleavage of Tyr-|-Gly bond in the picornavirus polyprotein.. The catalysed reaction is RNA(n) + a ribonucleoside 5'-triphosphate = RNA(n+1) + diphosphate. It carries out the reaction Selective cleavage of Gln-|-Gly bond in the poliovirus polyprotein. In other picornavirus reactions Glu may be substituted for Gln, and Ser or Thr for Gly.. Replication or transcription is subject to high level of random mutations by the nucleotide analog ribavirin. Forms an icosahedral capsid of pseudo T=3 symmetry with capsid proteins VP2 and VP3. The capsid is 300 Angstroms in diameter, composed of 60 copies of each capsid protein and enclosing the viral positive strand RNA genome. Capsid protein VP1 mainly forms the vertices of the capsid. Capsid protein VP1 interacts with host CXADR to provide virion attachment to target host cells. This attachment induces virion internalization. Tyrosine kinases are probably involved in the entry process. After binding to its receptor, the capsid undergoes conformational changes. Capsid protein VP1 N-terminus (that contains an amphipathic alpha-helix) and capsid protein VP4 are externalized. Together, they shape a pore in the host membrane through which viral genome is translocated to host cell cytoplasm. Its function is as follows. Forms an icosahedral capsid of pseudo T=3 symmetry with capsid proteins VP2 and VP3. The capsid is 300 Angstroms in diameter, composed of 60 copies of each capsid protein and enclosing the viral positive strand RNA genome. Functionally, lies on the inner surface of the capsid shell. After binding to the host receptor, the capsid undergoes conformational changes. Capsid protein VP4 is released, Capsid protein VP1 N-terminus is externalized, and together, they shape a pore in the host membrane through which the viral genome is translocated into the host cell cytoplasm. In terms of biological role, component of immature procapsids, which is cleaved into capsid proteins VP4 and VP2 after maturation. Allows the capsid to remain inactive before the maturation step. Cysteine protease that cleaves viral polyprotein and specific host proteins. It is responsible for the autocatalytic cleavage between the P1 and P2 regions, which is the first cleavage occurring in the polyprotein. Also cleaves the host translation initiation factor EIF4G1, in order to shut down the capped cellular mRNA translation. Inhibits the host nucleus-cytoplasm protein and RNA trafficking by cleaving host members of the nuclear pores. Counteracts stress granule formation probably by antagonizing its assembly or promoting its dissassembly. Cleaves and inhibits host IFIH1/MDA5, thereby inhibiting the type-I IFN production and the establishment of the antiviral state. Cleaves and inhibits host MAVS, thereby inhibiting the type-I IFN production and the establishment of the antiviral state. Its function is as follows. Plays an essential role in the virus replication cycle by acting as a viroporin. Creates a pore in the host endoplasmic reticulum and as a consequence releases Ca2+ in the cytoplasm of infected cell. In turn, high levels of cytoplasmic calcium may trigger membrane trafficking and transport of viral ER-associated proteins to viroplasms, sites of viral genome replication. Functionally, induces and associates with structural rearrangements of intracellular membranes. Displays RNA-binding, nucleotide binding and NTPase activities. May play a role in virion morphogenesis and viral RNA encapsidation by interacting with the capsid protein VP3. In terms of biological role, localizes the viral replication complex to the surface of membranous vesicles. Together with protein 3CD binds the Cis-Active RNA Element (CRE) which is involved in RNA synthesis initiation. Acts as a cofactor to stimulate the activity of 3D polymerase, maybe through a nucleid acid chaperone activity. Localizes the viral replication complex to the surface of membranous vesicles. It inhibits host cell endoplasmic reticulum-to-Golgi apparatus transport and causes the disassembly of the Golgi complex, possibly through GBF1 interaction. This would result in depletion of MHC, trail receptors and IFN receptors at the host cell surface. Plays an essential role in viral RNA replication by recruiting ACBD3 and PI4KB at the viral replication sites, thereby allowing the formation of the rearranged membranous structures where viral replication takes place. Its function is as follows. Acts as a primer for viral RNA replication and remains covalently bound to viral genomic RNA. VPg is uridylylated prior to priming replication into VPg-pUpU. The oriI viral genomic sequence may act as a template for this. The VPg-pUpU is then used as primer on the genomic RNA poly(A) by the RNA-dependent RNA polymerase to replicate the viral genome. During genome replication, the VPg-RNA linkage is removed by the host TDP2, thereby accelerating replication. During the late stage of the replication cycle, host TDP2 is excluded from sites of viral RNA synthesis and encapsidation, allowing for the generation of progeny virions. Functionally, involved in the viral replication complex and viral polypeptide maturation. It exhibits protease activity with a specificity and catalytic efficiency that is different from protease 3C. Protein 3CD lacks polymerase activity. Protein 3CD binds to the 5'UTR of the viral genome. In terms of biological role, replicates the viral genomic RNA on the surface of intracellular membranes. May form linear arrays of subunits that propagate along a strong head-to-tail interaction called interface-I. Covalently attaches UMP to a tyrosine of VPg, which is used to prime RNA synthesis. The positive stranded RNA genome is first replicated at virus induced membranous vesicles, creating a dsRNA genomic replication form. This dsRNA is then used as template to synthesize positive stranded RNA genomes. ss(+)RNA genomes are either translated, replicated or encapsidated. Major viral protease that mediates proteolytic processing of the polyprotein. Cleaves host EIF5B, contributing to host translation shutoff. Also cleaves host PABPC1, contributing to host translation shutoff. Cleaves host NLRP1, triggers host N-glycine-mediated degradation of the autoinhibitory NLRP1 N-terminal fragment. The chain is Genome polyprotein from Coxsackievirus B4 (strain JVB / Benschoten / New York/51).